We begin with the raw amino-acid sequence, 1556 residues long: Ferredoxin-dependent glutamate synthase 2 (1556 aa).

The active-site For GATase activity is the Cys37. Positions 37–431 constitute a Glutamine amidotransferase type-2 domain; the sequence is CGVGFIANLR…PGQMIAVDLA (395 aa). The [3Fe-4S] cluster site is built by Cys1173, Cys1179, and Cys1184. Positions 1533–1556 are disordered; sequence PSEKDSPEANGDVSLTGEKTLTSV.

This sequence belongs to the glutamate synthase family. [3Fe-4S] cluster serves as cofactor. It depends on FAD as a cofactor. Requires FMN as cofactor.

The enzyme catalyses 2 oxidized [2Fe-2S]-[ferredoxin] + 2 L-glutamate = L-glutamine + 2 reduced [2Fe-2S]-[ferredoxin] + 2-oxoglutarate + 2 H(+). It functions in the pathway amino-acid biosynthesis; L-glutamate biosynthesis via GLT pathway; L-glutamate from 2-oxoglutarate and L-glutamine (ferredoxin route): step 1/1. It participates in energy metabolism; nitrogen metabolism. The protein is Ferredoxin-dependent glutamate synthase 2 (gltS) of Synechocystis sp. (strain ATCC 27184 / PCC 6803 / Kazusa).